The sequence spans 387 residues: Mannitol-1-phosphate 5-dehydrogenase (387 aa).

Residue 3-14 (ALHFGAGNIGRG) participates in NAD(+) binding.

Belongs to the mannitol dehydrogenase family.

The catalysed reaction is D-mannitol 1-phosphate + NAD(+) = beta-D-fructose 6-phosphate + NADH + H(+). This is Mannitol-1-phosphate 5-dehydrogenase from Yersinia pseudotuberculosis serotype IB (strain PB1/+).